The sequence spans 31 residues: Diuretic hormone class 2 (31 aa).

Pro31 is subject to Proline amide.

It belongs to the diuretic hormone class 2 family.

It is found in the secreted. Its function is as follows. Regulation of fluid secretion. Stimulates primary urine secretion by Malpighian tubules and causes a dose-dependent stimulation of cAMP levels in the tubules. Has a nonselective effect on Na(+)/K(+) ion transport. In vitro, primarily elevates intracellular Ca(2+). In Apis mellifera (Honeybee), this protein is Diuretic hormone class 2.